Reading from the N-terminus, the 360-residue chain is Photosystem II protein D1 3 (360 aa).

3 helical membrane passes run 29–46, 118–133, and 142–156; these read YVGW…TAAI, HFLI…QWEL, and WIPV…AATA. Residue His118 coordinates chlorophyll a. Tyr126 contributes to the pheophytin a binding site. Positions 170 and 189 each coordinate [CaMn4O5] cluster. The helical transmembrane segment at 197–218 threads the bilayer; the sequence is FHMIGVAGVFGGALFSAMHGSL. His198 contributes to the chlorophyll a binding site. Residues His215 and 264–265 contribute to the a quinone site; that span reads SF. His215 serves as a coordination point for Fe cation. His272 lines the Fe cation pocket. Residues 274–288 form a helical membrane-spanning segment; the sequence is FLAAWPVIGIWFAAL. [CaMn4O5] cluster contacts are provided by His332, Glu333, Asp342, and Ala344. Positions 345 to 360 are excised as a propeptide; the sequence is SGEVQPIALTAPAIAS.

The protein belongs to the reaction center PufL/M/PsbA/D family. As to quaternary structure, PSII is composed of 1 copy each of membrane proteins PsbA, PsbB, PsbC, PsbD, PsbE, PsbF, PsbH, PsbI, PsbJ, PsbK, PsbL, PsbM, PsbT, PsbX, PsbY, PsbZ, Psb30/Ycf12, peripheral proteins PsbO, CyanoQ (PsbQ), PsbU, PsbV and a large number of cofactors. It forms dimeric complexes. The D1/D2 heterodimer binds P680, chlorophylls that are the primary electron donor of PSII, and subsequent electron acceptors. It shares a non-heme iron and each subunit binds pheophytin, quinone, additional chlorophylls, carotenoids and lipids. D1 provides most of the ligands for the Mn4-Ca-O5 cluster of the oxygen-evolving complex (OEC). There is also a Cl(-1) ion associated with D1 and D2, which is required for oxygen evolution. The PSII complex binds additional chlorophylls, carotenoids and specific lipids. serves as cofactor. In terms of processing, tyr-161 forms a radical intermediate that is referred to as redox-active TyrZ, YZ or Y-Z. C-terminally processed by CtpA; processing is essential to allow assembly of the oxygen-evolving complex and thus photosynthetic growth.

The protein resides in the cellular thylakoid membrane. The catalysed reaction is 2 a plastoquinone + 4 hnu + 2 H2O = 2 a plastoquinol + O2. Photosystem II (PSII) is a light-driven water:plastoquinone oxidoreductase that uses light energy to abstract electrons from H(2)O, generating O(2) and a proton gradient subsequently used for ATP formation. It consists of a core antenna complex that captures photons, and an electron transfer chain that converts photonic excitation into a charge separation. The D1/D2 (PsbA/PsbD) reaction center heterodimer binds P680, the primary electron donor of PSII as well as several subsequent electron acceptors. The polypeptide is Photosystem II protein D1 3 (Nostoc sp. (strain PCC 7120 / SAG 25.82 / UTEX 2576)).